Here is a 153-residue protein sequence, read N- to C-terminus: Ribosomal RNA large subunit methyltransferase H (153 aa).

Residues L63, G102, and 121 to 126 contribute to the S-adenosyl-L-methionine site; that span reads FGKITL.

It belongs to the RNA methyltransferase RlmH family. As to quaternary structure, homodimer.

Its subcellular location is the cytoplasm. It catalyses the reaction pseudouridine(1915) in 23S rRNA + S-adenosyl-L-methionine = N(3)-methylpseudouridine(1915) in 23S rRNA + S-adenosyl-L-homocysteine + H(+). Specifically methylates the pseudouridine at position 1915 (m3Psi1915) in 23S rRNA. This chain is Ribosomal RNA large subunit methyltransferase H, found in Sulfurovum sp. (strain NBC37-1).